A 278-amino-acid polypeptide reads, in one-letter code: Putative phosphatase MG265 (278 aa).

Aspartate 9 serves as the catalytic Nucleophile. Mg(2+) is bound at residue aspartate 9. Leucine 10 contributes to the phosphate binding site. Residue aspartate 11 participates in Mg(2+) binding. Phosphate contacts are provided by residues 43–44 (SG) and lysine 204. Mg(2+) is bound at residue aspartate 227. Residue asparagine 230 coordinates phosphate.

Belongs to the HAD-like hydrolase superfamily. Cof family. Mg(2+) serves as cofactor.

This Mycoplasma genitalium (strain ATCC 33530 / DSM 19775 / NCTC 10195 / G37) (Mycoplasmoides genitalium) protein is Putative phosphatase MG265.